The primary structure comprises 105 residues: Prokineticin-1 (105 aa).

Positions 1–19 (MRGAVQVFIMLLLATVSDC) are cleaved as a signal peptide. Intrachain disulfides connect cysteine 26-cysteine 38, cysteine 32-cysteine 50, cysteine 37-cysteine 78, cysteine 60-cysteine 86, and cysteine 80-cysteine 96.

This sequence belongs to the AVIT (prokineticin) family.

It localises to the secreted. Its function is as follows. Potently contracts gastrointestinal (GI) smooth muscle. Induces proliferation, migration and fenestration (the formation of membrane discontinuities) in capillary endothelial cells derived from endocrine glands. Has little or no effect on a variety of other endothelial and non-endothelial cell types. Induces proliferation and differentiation, but not migration, of enteric neural crest cells. Directly influences neuroblastoma progression by promoting the proliferation and migration of neuroblastoma cells. Positively regulates PTGS2 expression and prostaglandin synthesis. May play a role in placentation. May play a role in normal and pathological testis angiogenesis. This chain is Prokineticin-1 (Prok1), found in Rattus norvegicus (Rat).